The following is a 410-amino-acid chain: Heat stress transcription factor A-9 (410 aa).

The tract at residues 1 to 44 (MGSKKRSPQHPAAAAPPPAVGGGGGGEVSGDGGASTANGPVVPK) is disordered. Over residues 20–33 (VGGGGGGEVSGDGG) the composition is skewed to gly residues. The stretch at 171 to 246 (GLEKEVETLK…QLVQQQQQQR (76 aa)) forms a coiled coil. Positions 179 to 229 (LKRDKALLMQQLVDLRHYQQTSNLEVQNLIERLQVMEQNQQQMMALLAIVV) are hydrophobic repeat HR-A/B. The short motif at 256–260 (SKKRR) is the Nuclear localization signal element. Residues 279 to 290 (AHIVEYLPPVPE) carry the Nuclear export signal motif.

This sequence belongs to the HSF family. Class A subfamily. As to quaternary structure, homotrimer. Post-translationally, exhibits temperature-dependent phosphorylation.

The protein resides in the cytoplasm. It is found in the nucleus. In terms of biological role, transcriptional regulator that specifically binds DNA of heat shock promoter elements (HSE). This Oryza sativa subsp. japonica (Rice) protein is Heat stress transcription factor A-9 (HSFA9).